The primary structure comprises 413 residues: Zeaxanthin glucosyltransferase (413 aa).

This sequence belongs to the UDP-glycosyltransferase family.

It carries out the reaction all-trans-zeaxanthin + 2 UDP-alpha-D-glucose = zeaxanthin bis(beta-D-glucoside) + 2 UDP + 2 H(+). The protein operates within carotenoid biosynthesis; zeaxanthin diglucoside biosynthesis. In terms of biological role, catalyzes the glycosylation reaction which converts zeaxanthin to zeaxanthin bis(beta-D-glucoside). The reaction proceeds in two steps with the monoglucoside as an intermediate. This Pseudescherichia vulneris (Escherichia vulneris) protein is Zeaxanthin glucosyltransferase (crtX).